The primary structure comprises 137 residues: Secreted RxLR effector protein 67 (137 aa).

Positions 1–18 (MRLYILVLAAIAVTLVFA) are cleaved as a signal peptide. The short motif at 32–61 (RALRQASITDEKSDDSLNAQAPPLSKSEKR) is the RxLR-dEER element. The disordered stretch occupies residues 40-65 (TDEKSDDSLNAQAPPLSKSEKRLSRS). The chain crosses the membrane as a helical span at residues 114 to 134 (WFVRMILEAGIFWAVFHCLSA).

The protein belongs to the RxLR effector family.

Its subcellular location is the secreted. The protein resides in the host cytoplasm. It is found in the host nucleus. It localises to the membrane. In terms of biological role, effector that partially suppresses the tobacco programmed cell death induced by cell death-inducing proteins. The protein is Secreted RxLR effector protein 67 of Plasmopara viticola (Downy mildew of grapevine).